A 289-amino-acid polypeptide reads, in one-letter code: Phosphate import ATP-binding protein PstB (289 aa).

The interval 1–37 is disordered; it reads MRSIDRPGGQAARPTIGSVAGASNTRTRDARSLPDTP. An ABC transporter domain is found at 41-284; it reads AAAENFSFYY…PVRRETEDYI (244 aa). 73–80 provides a ligand contact to ATP; that stretch reads GPSGCGKS.

The protein belongs to the ABC transporter superfamily. Phosphate importer (TC 3.A.1.7) family. The complex is composed of two ATP-binding proteins (PstB), two transmembrane proteins (PstC and PstA) and a solute-binding protein (PstS).

The protein resides in the cell inner membrane. It catalyses the reaction phosphate(out) + ATP + H2O = ADP + 2 phosphate(in) + H(+). Part of the ABC transporter complex PstSACB involved in phosphate import. Responsible for energy coupling to the transport system. In Aromatoleum aromaticum (strain DSM 19018 / LMG 30748 / EbN1) (Azoarcus sp. (strain EbN1)), this protein is Phosphate import ATP-binding protein PstB.